We begin with the raw amino-acid sequence, 463 residues long: Adenylosuccinate synthetase, chloroplastic (463 aa).

Residues 44–50 (GDEGKGK) and 72–74 (GHT) each bind GTP. The active-site Proton acceptor is the aspartate 45. The Mg(2+) site is built by aspartate 45 and glycine 72. Residues 45-48 (DEGK), 70-73 (NAGH), threonine 164, arginine 178, asparagine 256, threonine 271, and arginine 335 each bind IMP. Residue histidine 73 is the Proton donor of the active site. Position 331–337 (331–337 (TTTGRPR)) interacts with substrate. Residues arginine 337, 363–365 (KLD), and 446–448 (GVG) each bind GTP.

It belongs to the adenylosuccinate synthetase family. Homodimer. Mg(2+) is required as a cofactor.

It localises to the plastid. It is found in the chloroplast. It catalyses the reaction IMP + L-aspartate + GTP = N(6)-(1,2-dicarboxyethyl)-AMP + GDP + phosphate + 2 H(+). The protein operates within purine metabolism; AMP biosynthesis via de novo pathway; AMP from IMP: step 1/2. Functionally, plays an important role in the de novo pathway and in the salvage pathway of purine nucleotide biosynthesis. Catalyzes the first committed step in the biosynthesis of AMP from IMP. This chain is Adenylosuccinate synthetase, chloroplastic, found in Chlamydomonas reinhardtii (Chlamydomonas smithii).